The sequence spans 429 residues: Fez family zinc finger protein 1 (429 aa).

Residues proline 29–proline 44 carry the Engrailed homology 1 repressor motif. C2H2-type zinc fingers lie at residues phenylalanine 247 to histidine 269, phenylalanine 275 to histidine 297, histidine 303 to histidine 325, phenylalanine 331 to histidine 353, phenylalanine 359 to histidine 381, and phenylalanine 387 to histidine 410. Residues leucine 409–glutamine 429 are disordered.

This sequence belongs to the krueppel C2H2-type zinc-finger protein family.

Its subcellular location is the nucleus. In terms of biological role, transcription repressor. Involved in the development of the forebrain region. The protein is Fez family zinc finger protein 1 (fezf1) of Danio rerio (Zebrafish).